A 430-amino-acid chain; its full sequence is Serine--tRNA ligase (430 aa).

234–236 is an L-serine binding site; sequence TAE. 265–267 contributes to the ATP binding site; that stretch reads RRE. An L-serine-binding site is contributed by Glu-288. Residue 352 to 355 coordinates ATP; that stretch reads EISS. Ser-388 contributes to the L-serine binding site.

Belongs to the class-II aminoacyl-tRNA synthetase family. Type-1 seryl-tRNA synthetase subfamily. As to quaternary structure, homodimer. The tRNA molecule binds across the dimer.

The protein resides in the cytoplasm. The catalysed reaction is tRNA(Ser) + L-serine + ATP = L-seryl-tRNA(Ser) + AMP + diphosphate + H(+). It carries out the reaction tRNA(Sec) + L-serine + ATP = L-seryl-tRNA(Sec) + AMP + diphosphate + H(+). It participates in aminoacyl-tRNA biosynthesis; selenocysteinyl-tRNA(Sec) biosynthesis; L-seryl-tRNA(Sec) from L-serine and tRNA(Sec): step 1/1. Catalyzes the attachment of serine to tRNA(Ser). Is also able to aminoacylate tRNA(Sec) with serine, to form the misacylated tRNA L-seryl-tRNA(Sec), which will be further converted into selenocysteinyl-tRNA(Sec). The polypeptide is Serine--tRNA ligase (Thermosynechococcus vestitus (strain NIES-2133 / IAM M-273 / BP-1)).